The primary structure comprises 254 residues: MLAKRIIPCLDVTAGRVVKGVNFLGLRDAGDPVEIARRYNEQGADELTFLDITASSDQRDIILHVIEAVADQVFIPLTVGGGVRSIADIRRLLNAGADKVSINTAAVTHPEFVQQASEHFGNQCIVVALDAKAVTPENDRWEIFTHGGRNRTGLDAVEWARKMQQLGAGEILLTSMDRDGTKAGFNLPLTRAVSDAVNIPVIASGGVGNLQHLVDGVKEGHADAVLAASIFHFGEYTVDQAKQAMRAAGIEVRL.

Active-site residues include Asp-11 and Asp-130.

The protein belongs to the HisA/HisF family. Heterodimer of HisH and HisF.

It localises to the cytoplasm. The catalysed reaction is 5-[(5-phospho-1-deoxy-D-ribulos-1-ylimino)methylamino]-1-(5-phospho-beta-D-ribosyl)imidazole-4-carboxamide + L-glutamine = D-erythro-1-(imidazol-4-yl)glycerol 3-phosphate + 5-amino-1-(5-phospho-beta-D-ribosyl)imidazole-4-carboxamide + L-glutamate + H(+). The protein operates within amino-acid biosynthesis; L-histidine biosynthesis; L-histidine from 5-phospho-alpha-D-ribose 1-diphosphate: step 5/9. IGPS catalyzes the conversion of PRFAR and glutamine to IGP, AICAR and glutamate. The HisF subunit catalyzes the cyclization activity that produces IGP and AICAR from PRFAR using the ammonia provided by the HisH subunit. The polypeptide is Imidazole glycerol phosphate synthase subunit HisF (Chromobacterium violaceum (strain ATCC 12472 / DSM 30191 / JCM 1249 / CCUG 213 / NBRC 12614 / NCIMB 9131 / NCTC 9757 / MK)).